Here is a 169-residue protein sequence, read N- to C-terminus: Large ribosomal subunit protein bL17 (169 aa).

The disordered stretch occupies residues 124-169 (EKAVKRQDRSRRVKGSKKAIDEKTSDDSASVEAAPAAPEAEEKKDA). The span at 131-140 (DRSRRVKGSK) shows a compositional bias: basic residues. A compositionally biased stretch (low complexity) spans 150-161 (DSASVEAAPAAP).

Belongs to the bacterial ribosomal protein bL17 family. As to quaternary structure, part of the 50S ribosomal subunit. Contacts protein L32.

This chain is Large ribosomal subunit protein bL17, found in Chloroherpeton thalassium (strain ATCC 35110 / GB-78).